The primary structure comprises 238 residues: Ribonuclease PH (238 aa).

Phosphate contacts are provided by residues arginine 86 and 124–126 (GTR).

Belongs to the RNase PH family. In terms of assembly, homodimer. Has a tendency to aggregate into multimers. The cofactor is Mg(2+).

The catalysed reaction is tRNA(n+1) + phosphate = tRNA(n) + a ribonucleoside 5'-diphosphate. In terms of biological role, phosphorolytic exoribonuclease that plays an important role in tRNA 3'-end maturation; has no activity on a tRNA precursor with a 3'-terminal phosphate group. In vitro is freely reversible, adds nucleotides to the ends of RNA molecules by using nucleoside diphosphates as substrates, but this may not be physiologically important. Probably plays a role in initiation of 16S rRNA degradation (leading to ribosome degradation) during starvation. This is Ribonuclease PH from Escherichia coli (strain K12 / MC4100 / BW2952).